A 562-amino-acid chain; its full sequence is NAD-dependent malic enzyme (562 aa).

Residue Tyr-101 is the Proton donor of the active site. Residue Arg-154 coordinates NAD(+). Lys-172 serves as the catalytic Proton acceptor. A divalent metal cation-binding residues include Glu-243, Asp-244, and Asp-267. NAD(+) is bound by residues Asp-267 and Asn-415.

This sequence belongs to the malic enzymes family. In terms of assembly, homotetramer. The cofactor is Mg(2+). Requires Mn(2+) as cofactor.

The enzyme catalyses (S)-malate + NAD(+) = pyruvate + CO2 + NADH. The catalysed reaction is oxaloacetate + H(+) = pyruvate + CO2. In Shewanella sp. (strain ANA-3), this protein is NAD-dependent malic enzyme.